Consider the following 483-residue polypeptide: MAGGRRGPNRTSYCRTPLCEPGSAGGAVHGGIPSVSGVRSRARSSSSTGLSSPPLATQTVVPLRHCKIPDLPADRHLLFELQLFFCHLIALFVHYINIYKTVWWYPPSHPPSHTSLNFHLIDFNVLTLTTIVLARRLIGAIVREASQGGKSSVPHSLLLVATRFAVLTGTGWSLCRSIILLFRTHSFFNLLFLCYPFGMYIPFLQLGWDFRRPGLSHMPNTRDLASMDRGSKDYLHVLQHILRHHMPSAEPLPTHACCLSPDLIRSEVHYLKLDFNWRVREVLLSSMLSAYYVAFVPVWFVKSTQYYDKRWSCELFLQVSLSTSVILTQHLLPARYCDLLHKAAAHLGCWQKVDPALCSNMLQHSWMEECMWPQGVLVKHNKNVYKAVGHYNVAIPSDVSHFRFHFFFSNPLRVLNILTTLEGVLIFYQLYSLLSSEKWHHTISLALILFSNYYAFFKLLRDRIVLGKAYFYTAVPDCERKLN.

An N-linked (GlcNAc...) asparagine glycan is attached at N9. 7 consecutive transmembrane segments (helical) span residues 76–96 (HLLF…VHYI), 114–134 (TSLN…IVLA), 158–182 (LLVA…ILLF), 187–207 (FFNL…LQLG), 281–301 (EVLL…VWFV), 414–434 (VLNI…YSLL), and 440–460 (HHTI…FKLL).

Belongs to the TMEM39 family.

It is found in the endoplasmic reticulum membrane. May protect the cells against DNA damage caused by exposure to the cold-warming stress and facilitates tissue damage repair during the recovery phase. This chain is Transmembrane protein 39B, found in Xenopus tropicalis (Western clawed frog).